Reading from the N-terminus, the 257-residue chain is Undecaprenyl-diphosphatase (257 aa).

8 consecutive transmembrane segments (helical) span residues 4-24, 41-61, 74-94, 103-123, 133-153, 173-193, 209-229, and 236-256; these read LIRV…PISS, SVTL…VVFW, VIGL…TIKT, PLLA…LGRL, LGLG…LPGI, SVTF…VLAI, VLSI…KWLI, and RLHW…LLNL.

It belongs to the UppP family.

It localises to the cell inner membrane. It catalyses the reaction di-trans,octa-cis-undecaprenyl diphosphate + H2O = di-trans,octa-cis-undecaprenyl phosphate + phosphate + H(+). Catalyzes the dephosphorylation of undecaprenyl diphosphate (UPP). Confers resistance to bacitracin. This chain is Undecaprenyl-diphosphatase, found in Rhodopirellula baltica (strain DSM 10527 / NCIMB 13988 / SH1).